Consider the following 514-residue polypeptide: Protein translocase subunit SecD (514 aa).

Transmembrane regions (helical) follow at residues 7–27 (WKIFLSIICTIFAVICALPNF), 357–377 (IIGFAAVCIFMVWSYGLLGLF), 389–409 (VLALLSLFQATLTLPGIAGII), 448–470 (FATILDSNLTTLIVAFLLYIFGV), and 482–502 (IGIISSMFSAIIITKLLIDIW).

Belongs to the SecD/SecF family. SecD subfamily. Forms a complex with SecF. Part of the essential Sec protein translocation apparatus which comprises SecA, SecYEG and auxiliary proteins SecDF-YajC and YidC.

Its subcellular location is the cell inner membrane. Part of the Sec protein translocase complex. Interacts with the SecYEG preprotein conducting channel. SecDF uses the proton motive force (PMF) to complete protein translocation after the ATP-dependent function of SecA. This is Protein translocase subunit SecD from Rickettsia bellii (strain RML369-C).